We begin with the raw amino-acid sequence, 376 residues long: MLSVPASSRIDFAGSPRPTVGVEWEFALVDAHTRDLSNEAATVIAEIGETPHVHKELLRNTVEVVTGICENTGEAMADLHDTLQVVRRIVRDRGMELFCAGTHPFANWSTQQLTDAPRYAELIKRTQWWGRQMLIWGVHVHVGISSAHKVMPIISSLLNQYPHLLALSASSPYWDGSDTGYASNRAMMFQQLPTAGLPFQFQSWPEFERFVHDQKKTGIIDHMNEIRWDIRPSPHLGTVEIRVFDGVSNIAELGSLVALTHCLVVDLDRRLDAGEQLPVMPPWHVQENKWRAARYGLDAEIILDADSNERLVTEDLDDLLTRLQPVARSLDCADELAGVAEIYRHGASYQRQRRVAEEHDGDLLAVVDALVAELEL.

The protein belongs to the glutamate--cysteine ligase type 2 family. YbdK subfamily.

The enzyme catalyses L-cysteine + L-glutamate + ATP = gamma-L-glutamyl-L-cysteine + ADP + phosphate + H(+). ATP-dependent carboxylate-amine ligase which exhibits weak glutamate--cysteine ligase activity. This chain is Putative glutamate--cysteine ligase 2-1, found in Mycobacterium sp. (strain JLS).